Consider the following 67-residue polypeptide: ATP synthase F(0) complex subunit 8 (67 aa).

A helical membrane pass occupies residues 8-24 (TWFTVILSMIISLFMLL). Position 54 is an N6-acetyllysine; alternate (K54). Residue K54 is modified to N6-succinyllysine; alternate. N6-acetyllysine is present on K57.

It belongs to the ATPase protein 8 family. Component of the ATP synthase complex composed at least of ATP5F1A/subunit alpha, ATP5F1B/subunit beta, ATP5MC1/subunit c (homooctomer), MT-ATP6/subunit a, MT-ATP8/subunit 8, ATP5ME/subunit e, ATP5MF/subunit f, ATP5MG/subunit g, ATP5MK/subunit k, ATP5MJ/subunit j, ATP5F1C/subunit gamma, ATP5F1D/subunit delta, ATP5F1E/subunit epsilon, ATP5PF/subunit F6, ATP5PB/subunit b, ATP5PD/subunit d, ATP5PO/subunit OSCP. ATP synthase complex consists of a soluble F(1) head domain (subunits alpha(3) and beta(3)) - the catalytic core - and a membrane F(0) domain - the membrane proton channel (subunits c, a, 8, e, f, g, k and j). These two domains are linked by a central stalk (subunits gamma, delta, and epsilon) rotating inside the F1 region and a stationary peripheral stalk (subunits F6, b, d, and OSCP). Interacts with PRICKLE3.

The protein localises to the mitochondrion membrane. Its function is as follows. Subunit 8, of the mitochondrial membrane ATP synthase complex (F(1)F(0) ATP synthase or Complex V) that produces ATP from ADP in the presence of a proton gradient across the membrane which is generated by electron transport complexes of the respiratory chain. ATP synthase complex consist of a soluble F(1) head domain - the catalytic core - and a membrane F(1) domain - the membrane proton channel. These two domains are linked by a central stalk rotating inside the F(1) region and a stationary peripheral stalk. During catalysis, ATP synthesis in the catalytic domain of F(1) is coupled via a rotary mechanism of the central stalk subunits to proton translocation. In vivo, can only synthesize ATP although its ATP hydrolase activity can be activated artificially in vitro. Part of the complex F(0) domain. In Cavia porcellus (Guinea pig), this protein is ATP synthase F(0) complex subunit 8.